Here is a 227-residue protein sequence, read N- to C-terminus: Cleavage and polyadenylation specificity factor subunit 5 (227 aa).

A Nudix hydrolase domain is found at 76–201; it reads MRRTVEGVLI…KLVAAPLFEL (126 aa). The interval 102–104 is interaction with RNA; it reads TFF. The Nudix box motif lies at 109–130; that stretch reads GELNPGEDEVEGLKRLMTEILG.

The protein belongs to the Nudix hydrolase family. CPSF5 subfamily. As to quaternary structure, homodimer (via N- and C-terminus); binds RNA as homodimer. Component of the cleavage factor Im (CFIm) complex.

It is found in the nucleus. The protein localises to the cytoplasm. Its function is as follows. Component of the cleavage factor Im (CFIm) complex that functions as an activator of the pre-mRNA 3'-end cleavage and polyadenylation processing required for the maturation of pre-mRNA into functional mRNAs. CFIm contributes to the recruitment of multiprotein complexes on specific sequences on the pre-mRNA 3'-end, so called cleavage and polyadenylation signals (pA signals). Most pre-mRNAs contain multiple pA signals, resulting in alternative cleavage and polyadenylation (APA) producing mRNAs with variable 3'-end formation. The CFIm complex acts as a key regulator of cleavage and polyadenylation site choice during APA through its binding to 5'-UGUA-3' elements localized in the 3'-untranslated region (UTR) for a huge number of pre-mRNAs. Binds to 5'-UGUA-3' elements localized upstream of pA signals that act as enhancers of pre-mRNA 3'-end processing. The homodimer mediates simultaneous sequence-specific recognition of two 5'-UGUA-3' elements within the pre-mRNA. Plays a role in somatic cell fate transitions and pluripotency by regulating widespread changes in gene expression through an APA-dependent function. Binds to chromatin. Binds to, but does not hydrolyze mono- and di-adenosine nucleotides. In Xenopus laevis (African clawed frog), this protein is Cleavage and polyadenylation specificity factor subunit 5.